Consider the following 211-residue polypeptide: MRLRKKWWARPEMEASSLVITNPKEYKGKWMEEFKNNNSIHLELGCGRGGFMQEKALKNPNINYVAVDLKDEILIYVLRKLKEKEIENVRIVPLNIAFISEVFEKDEIEKIYINFCNPWPKLRHNKRRLTHNKFLDEYKKFLKGQGEIWFKTDDIGLFEDSQEYFKESGFSIEYITYDLHKSDFKDNIMTEYETKFTSMGMKTMFLIAKLK.

The S-adenosyl-L-methionine site is built by E43, D68, N95, and N117. Substrate is bound at residue K121. Residues 123 to 128 (RHNKRR) are interaction with RNA. Substrate contacts are provided by residues D153 and 190–193 (TEYE).

This sequence belongs to the class I-like SAM-binding methyltransferase superfamily. TrmB family.

The catalysed reaction is guanosine(46) in tRNA + S-adenosyl-L-methionine = N(7)-methylguanosine(46) in tRNA + S-adenosyl-L-homocysteine. It functions in the pathway tRNA modification; N(7)-methylguanine-tRNA biosynthesis. Catalyzes the formation of N(7)-methylguanine at position 46 (m7G46) in tRNA. The protein is tRNA (guanine-N(7)-)-methyltransferase of Clostridium tetani (strain Massachusetts / E88).